Consider the following 733-residue polypeptide: MEVDSILGSLSITDDFDQLVDVTSLFDELCSKLKPEAIVKDPRFDLFEGTHSLEVNNSKLDSSLIELTAEEIEFDVNVAYDPPLASVAAIADRLLRCVISWLNDYQTLPTTVLSCRYTESLLSSLVKGTTAGSSWCTGNILYDKVLGSCILGVCYLTKFVQKLLSAGIVFEEEDLNFNNMGFNTFDNLPGQDVVINSLTESLQILEAYSDDSLHLTMLKHILKIIICLVHLEDHLTDYSTKTSHLDELIENANSVNGIFPQLQLSPPKGAFSTYIQKHRSNQFPPRKITKLPTDYSGFITLANDVKTILLVDKAESALETYQFAKFFNKLEQRHVIARILFPLFFIRDDRTVLGKFSYTQFYLLHVKEFSAQTPSEFESSIGNELIQESSNMLLEWYQNCSQNTCRYRQGFNRQLILWDSLQAQFESVNSQVYCSWTYFMKLSSMIEFSLKGFDLDIYKPFEAYSMFWYVYYLSHHLETFLKDSQNDIESNINAIHSMNKKLKKLKAGEKKDQLRLKYRFAMDNEMEQLQATKQFLNYLLKEINITKSLCLIEVFQFAILKSFGLIDNKNSTPSKFSNERLIHNLRFKPFNSIGVPELPEYEVFQQTLKDFVIEEKGAAFDIKLERATNFIETEVRNVVSSIDEIMQGIKGGDNNGVLVTGTRLVQELSLEYYCKLKHTSKALSVNSKVIVNTLKKNIKNKDSHEYKVELVHTTEGWNYFPIQTLRIKQDRYK.

Belongs to the MAK10 family. As to quaternary structure, component of the N-terminal acetyltransferase C (NatC) complex, which is composed of MAK3, MAK10 and MAK31.

The protein resides in the cytoplasm. Component of the NatC N-terminal acetyltransferase, which catalyzes acetylation of the N-terminus Met of L-A virus Gag protein. MAK10 has a role in the propagation of L-A and M viruses, perhaps in the viral assembly. It is apparently directly needed for optimum respiration. The protein is N-alpha-acetyltransferase 35, NatC auxiliary subunit (MAK10) of Saccharomyces cerevisiae (strain ATCC 204508 / S288c) (Baker's yeast).